A 1284-amino-acid polypeptide reads, in one-letter code: Zinc finger protein 423 (1284 aa).

Disordered regions lie at residues 1-64 (MHKK…MEDE) and 87-117 (AHRC…SPTQ). Residues 34 to 46 (CDQKTSRALEDRN) show a composition bias toward basic and acidic residues. 2 positions are modified to phosphoserine: Ser47 and Ser50. The span at 54–64 (RNEDDEDMEDE) shows a compositional bias: acidic residues. A C2H2-type 1; degenerate zinc finger spans residues 67–93 (YTCDHCQQDFESLADLTDHRAHRCPGD). A compositionally biased stretch (polar residues) spans 102-117 (WVASSPSSKDVASPTQ). 7 C2H2-type zinc fingers span residues 138 to 160 (YPCQ…EQIH), 166 to 188 (FKCT…IKLH), 194 to 216 (YHCH…LKTH), 222 to 244 (FKCT…MQAH), 263 to 286 (FMCD…LTRH), 295 to 318 (LQCI…HQAH), and 323 to 345 (HKCP…LDSH). The segment at 346–398 (RQPDSSNHSVSPDPVLGSVASMSSATPDSSASVERGSTPDSTLKPLRGQKKMR) is disordered. The span at 363–377 (SVASMSSATPDSSAS) shows a compositional bias: low complexity. The C2H2-type 9; degenerate zinc finger occupies 409-433 (YSCPYCSKRDFNSLAVLEIHLKTIH). 3 C2H2-type zinc fingers span residues 441–464 (HTCQ…RKLH), 480–503 (FHCN…RVSH), and 517–540 (FFCN…QQAH). The segment at 563 to 588 (YSCPYCTNSPIFGSILKLTKHIKENH) adopts a C2H2-type 13; atypical zinc-finger fold. The interval 590–624 (NIPLAHSKKSKAEQSPVSSDVEVSSPKRQRLSASA) is disordered. Ser604 carries the phosphoserine modification. The span at 604-615 (SPVSSDVEVSSP) shows a compositional bias: low complexity. 7 consecutive C2H2-type zinc fingers follow at residues 632-654 (YPCN…LKLH), 662-684 (QACP…LTVH), 692-715 (YVCE…LDMH), 720-743 (YHCT…AVKH), 750-773 (YRCT…KHSH), 781-803 (HKCI…ITTH), and 807-830 (YNCK…REKH). The segment at 886–908 (YGCDICGAAYTMEVLLQNHRLRD) adopts a C2H2-type 21; degenerate zinc-finger fold. C2H2-type zinc fingers lie at residues 930–952 (HKCN…LQTH), 959–981 (YMCP…KVTH), and 1020–1042 (FRCV…GTFH). Position 1054 is a phosphoserine (Ser1054). The C2H2-type 25; degenerate zinc finger occupies 1064–1082 (YKCALCLKEFRSKQDLVKL). 5 C2H2-type zinc fingers span residues 1120 to 1143 (LRCP…QVDH), 1168 to 1190 (YQCI…VANH), 1198 to 1220 (HECK…LIEH), 1229 to 1252 (FKCP…FAVH), and 1259 to 1282 (YDCS…MSQH). Positions 1136–1147 (ESHMQVDHRDLT) are enriched in basic and acidic residues. Residues 1136 to 1163 (ESHMQVDHRDLTPETSGPRKGTQTSPVP) are disordered.

It belongs to the krueppel C2H2-type zinc-finger protein family. Homodimer. Interacts with EBF1. Interacts with SMAD1 and SMAD4. Interacts with PARP1. Interacts with CEP290. Expressed in brain, lung, skeletal muscle, heart, pancreas and kidney but not liver or placenta. Also expressed in aorta, ovary, pituitary, small intestine, fetal brain, fetal kidney and, within the adult brain, in the substantia nigra, medulla, amygdala, thalamus and cerebellum.

It localises to the nucleus. In terms of biological role, transcription factor that can both act as an activator or a repressor depending on the context. Plays a central role in BMP signaling and olfactory neurogenesis. Associates with SMADs in response to BMP2 leading to activate transcription of BMP target genes. Acts as a transcriptional repressor via its interaction with EBF1, a transcription factor involved in terminal olfactory receptor neurons differentiation; this interaction preventing EBF1 to bind DNA and activate olfactory-specific genes. Involved in olfactory neurogenesis by participating in a developmental switch that regulates the transition from differentiation to maturation in olfactory receptor neurons. Controls proliferation and differentiation of neural precursors in cerebellar vermis formation. The polypeptide is Zinc finger protein 423 (ZNF423) (Homo sapiens (Human)).